We begin with the raw amino-acid sequence, 551 residues long: Delta-selinene synthase TPS7FN (551 aa).

(2E,6E)-farnesyl diphosphate-binding residues include R266, D303, D307, R444, and D447. The Mg(2+) site is built by D303 and D307. The DDXXD motif signature appears at 303-307 (DDIYD). 3 residues coordinate Mg(2+): D447, S451, and E455.

Belongs to the terpene synthase family. Tpsb subfamily. Mg(2+) serves as cofactor. It depends on Mn(2+) as a cofactor.

It catalyses the reaction (2E,6E)-farnesyl diphosphate = delta-selinene + diphosphate. The enzyme catalyses (2E)-geranyl diphosphate = beta-myrcene + diphosphate. It carries out the reaction (2E)-geranyl diphosphate = (4S)-limonene + diphosphate. The catalysed reaction is (2E,6E)-farnesyl diphosphate + H2O = selina-6-en-4-ol + diphosphate. It functions in the pathway secondary metabolite biosynthesis; terpenoid biosynthesis. Involved in sesquiterpene olefins biosynthesis, constituants of cannabinoids and terpenoids-rich resins. Catalyzes mainly the conversion of (2E)-farnesyl diphosphate to delta-selinene, and also produces minor products such as selina-6-en-4-ol. Can also use (2E)-geranyl diphosphate as substrate with low efficiency, producing minor amounts of myrcene and limonene. This is Delta-selinene synthase TPS7FN from Cannabis sativa (Hemp).